A 493-amino-acid chain; its full sequence is Solute carrier family 2, facilitated glucose transporter member 3 (493 aa).

The Cytoplasmic portion of the chain corresponds to 1 to 10; sequence MGTTKVTPSL. The chain crosses the membrane as a helical span at residues 11–32; the sequence is VFAVTVATIGSFQFGYNTGVIN. Residues 33–64 are Extracellular-facing; the sequence is APETILKDFLNYTLEERLEDLPSEGLLTALWS. N-linked (GlcNAc...) asparagine glycosylation occurs at asparagine 43. A helical transmembrane segment spans residues 65 to 85; it reads LCVAIFSVGGMIGSFSVGLFV. The Cytoplasmic portion of the chain corresponds to 86-90; the sequence is NRFGR. Residues 91–111 form a helical membrane-spanning segment; the sequence is RNSMLLVNLLAIIAGCLMGFA. The Extracellular segment spans residues 112–118; it reads KIAESVE. A helical transmembrane segment spans residues 119-142; the sequence is MLILGRLLIGIFCGLCTGFVPMYI. Over 143 to 153 the chain is Cytoplasmic; that stretch reads GEVSPTALRGA. The chain crosses the membrane as a helical span at residues 154–174; the sequence is FGTLNQLGIVVGILVAQIFGL. Glutamine 159 is a D-glucose binding site. Residues 175 to 183 are Extracellular-facing; the sequence is DFILGSEEL. Residues 184–204 form a helical membrane-spanning segment; sequence WPGLLGLTIIPAILQSAALPF. Topologically, residues 205 to 269 are cytoplasmic; it reads CPESPRFLLI…LFRSPNYVQP (65 aa). Phosphothreonine is present on threonine 232. The chain crosses the membrane as a helical span at residues 270–290; the sequence is LLISIVLQLSQQLSGINAVFY. The segment at 277 to 279 is important for selectivity against fructose; it reads QLS. Residues 280 to 281 and asparagine 286 each bind D-glucose; that span reads QQ. At 291–304 the chain is on the extracellular side; sequence YSTGIFKDAGVQEP. The chain crosses the membrane as a helical span at residues 305–325; sequence IYATIGAGVVNTIFTVVSLFL. Asparagine 315 contacts D-glucose. The Cytoplasmic portion of the chain corresponds to 326–331; it reads VERAGR. Residues 332–352 form a helical membrane-spanning segment; it reads RTLHMIGLGGMAVCSVFMTIS. The Extracellular segment spans residues 353-363; that stretch reads LLLKDDYEAMS. A helical transmembrane segment spans residues 364–389; the sequence is FVCIVAILIYVAFFEIGPGPIPWFIV. The D-glucose site is built by glutamate 378 and tryptophan 386. The Cytoplasmic portion of the chain corresponds to 390-399; it reads AELFSQGPRP. A helical membrane pass occupies residues 400-420; the sequence is AAIAVAGCCNWTSNFLVGMLF. Topologically, residues 421–429 are extracellular; the sequence is PSAAAYLGA. A helical transmembrane segment spans residues 430 to 450; the sequence is YVFIIFAAFLIFFLIFTFFKV. Residues 451–493 are Cytoplasmic-facing; it reads PETKGRTFEDIARAFEGQAHSGKGPAGVELNSMQPVKETPGNA. The interval 469–493 is disordered; the sequence is AHSGKGPAGVELNSMQPVKETPGNA. A phosphoserine mark is found at serine 471 and serine 482. Threonine 489 is modified (phosphothreonine).

It belongs to the major facilitator superfamily. Sugar transporter (TC 2.A.1.1) family. Glucose transporter subfamily. As to quaternary structure, interacts with SMIM43; the interaction may promote SLC2A3-mediated glucose transport to meet the energy needs of mesendoderm differentiation. In terms of tissue distribution, expressed in spermatozoa (at protein level). Detected in brain (at protein level). Abundantly expressed in the hippocampus, cerebellum and cerebral cortex with lower expression in the dentate gyrus and piriform cortex.

The protein resides in the cell membrane. Its subcellular location is the perikaryon. It localises to the cell projection. The catalysed reaction is D-glucose(out) = D-glucose(in). It catalyses the reaction D-galactose(in) = D-galactose(out). Its activity is regulated as follows. Deoxyglucose transport is inhibited by D-glucose, D-galactose and maltose. Galactose transport is inhibited by D-glucose and maltose. Facilitative glucose transporter. Can also mediate the uptake of various other monosaccharides across the cell membrane. Mediates the uptake of glucose, 2-deoxyglucose, galactose, mannose, xylose and fucose, and probably also dehydroascorbate. Does not mediate fructose transport. Required for mesendoderm differentiation. This Mus musculus (Mouse) protein is Solute carrier family 2, facilitated glucose transporter member 3.